Here is a 190-residue protein sequence, read N- to C-terminus: Protein A52 (190 aa).

The protein belongs to the orthopoxvirus A52R protein family. In terms of assembly, interacts with host TRAF6 and IRAK2.

Bcl-2-like protein which targets host toll-like receptor signaling complexes to suppress innate immune response. Interacts with host TRAF6 to activate p38 and subsequently induce the expression of several cytokines such as IL-10. Also associates with host IRAK2 to inhibit NF-kappa-B signaling. This chain is Protein A52, found in Vaccinia virus (strain Western Reserve) (VACV).